A 154-amino-acid polypeptide reads, in one-letter code: Small ribosomal subunit protein bS6 (154 aa).

The tract at residues 94–154 (VKQEGPLPTP…SSQGKESQKS (61 aa)) is disordered. A compositionally biased stretch (polar residues) spans 103–112 (PRSSNKGYNQ). A compositionally biased stretch (basic and acidic residues) spans 113–139 (SEKKDIESIDSTNKSEFKEEANDKKTA). Residues 140-154 (TSESTSSQGKESQKS) are compositionally biased toward polar residues.

This sequence belongs to the bacterial ribosomal protein bS6 family.

Binds together with bS18 to 16S ribosomal RNA. This Prochlorococcus marinus subsp. pastoris (strain CCMP1986 / NIES-2087 / MED4) protein is Small ribosomal subunit protein bS6.